The primary structure comprises 110 residues: Disintegrin jerdostatin (110 aa).

Positions 1–20 (MIQVLLVTICLAVFPYQVSS) are cleaved as a signal peptide. The propeptide occupies 21–67 (KTLKSGSVNEYEVVNPGTVTGLPKGAVKQPEKKHEPMKGNTLQKLPL). Residues 27–110 (SVNEYEVVNP…CECPSYPGNG (84 aa)) form the Disintegrin domain. 4 disulfide bridges follow: Cys-68/Cys-77, Cys-73/Cys-96, Cys-74/Cys-101, and Cys-86/Cys-103. Positions 88–90 (RTS) match the Cell attachment site; atypical (RTS) motif.

It belongs to the disintegrin family. Short disintegrin subfamily. Monomer. Two conformers are found, they may differ by their disulfide bond connectivities. Conformer 2 is 33 times less active than conformer 1. Conformer 2 may represent a non-native protein. Post-translationally, the C-terminal dipeptide may be post-translationally removed, as seen in disintegrins that possess a KTS integrin-binding motif. Expressed by the venom gland.

It localises to the secreted. Functionally, recombinant protein inhibits the adhesion of alpha-1/beta-1-K562 (ITGA1/ITGB1) cells to collagen IV with an IC(50) of 80 nM. The sequence is that of Disintegrin jerdostatin from Protobothrops jerdonii (Jerdon's pitviper).